Reading from the N-terminus, the 152-residue chain is Sorting nexin-3 (152 aa).

The PX domain occupies 30–147 (NFLEIEVRSP…CAFIQDPQWD (118 aa)). Positions 73, 75, 99, 104, and 113 each coordinate a 1,2-diacyl-sn-glycero-3-phospho-(1D-myo-inositol-3-phosphate).

The protein belongs to the sorting nexin family.

It localises to the cytoplasm. The protein resides in the golgi apparatus membrane. It is found in the prevacuolar compartment membrane. In terms of biological role, required for retention of late Golgi membrane proteins. Component of the retrieval machinery that functions by direct interaction with the cytosolic tails of certain TGN membrane proteins during the sorting/budding process at the prevacuolar compartment. Binds phosphatidylinositol 3-phosphate (PtdIns(P3)). The polypeptide is Sorting nexin-3 (SNX3) (Yarrowia lipolytica (strain CLIB 122 / E 150) (Yeast)).